Here is a 428-residue protein sequence, read N- to C-terminus: Enolase (428 aa).

Glutamine 163 provides a ligand contact to (2R)-2-phosphoglycerate. Glutamate 205 functions as the Proton donor in the catalytic mechanism. 3 residues coordinate Mg(2+): aspartate 242, glutamate 283, and aspartate 310. (2R)-2-phosphoglycerate-binding residues include lysine 335, arginine 364, serine 365, and lysine 386. Lysine 335 (proton acceptor) is an active-site residue.

Belongs to the enolase family. Mg(2+) is required as a cofactor.

It localises to the cytoplasm. The protein resides in the secreted. It is found in the cell surface. It carries out the reaction (2R)-2-phosphoglycerate = phosphoenolpyruvate + H2O. It participates in carbohydrate degradation; glycolysis; pyruvate from D-glyceraldehyde 3-phosphate: step 4/5. In terms of biological role, catalyzes the reversible conversion of 2-phosphoglycerate (2-PG) into phosphoenolpyruvate (PEP). It is essential for the degradation of carbohydrates via glycolysis. In Streptomyces avermitilis (strain ATCC 31267 / DSM 46492 / JCM 5070 / NBRC 14893 / NCIMB 12804 / NRRL 8165 / MA-4680), this protein is Enolase.